Here is a 518-residue protein sequence, read N- to C-terminus: Chromosomal replication initiator protein DnaA (518 aa).

Residues Met-1–Ala-73 are domain I, interacts with DnaA modulators. The interval Ala-73–Thr-180 is domain II. The tract at residues His-144–Thr-180 is disordered. The span at Ala-164–Tyr-177 shows a compositional bias: basic and acidic residues. Residues Asn-181 to Ser-397 are domain III, AAA+ region. The ATP site is built by Gly-225, Gly-227, Lys-228, and Thr-229. The tract at residues Arg-398 to Asn-518 is domain IV, binds dsDNA.

The protein belongs to the DnaA family. In terms of assembly, oligomerizes as a right-handed, spiral filament on DNA at oriC.

Its subcellular location is the cytoplasm. Plays an essential role in the initiation and regulation of chromosomal replication. ATP-DnaA binds to the origin of replication (oriC) to initiate formation of the DNA replication initiation complex once per cell cycle. Binds the DnaA box (a 9 base pair repeat at the origin) and separates the double-stranded (ds)DNA. Forms a right-handed helical filament on oriC DNA; dsDNA binds to the exterior of the filament while single-stranded (ss)DNA is stabiized in the filament's interior. The ATP-DnaA-oriC complex binds and stabilizes one strand of the AT-rich DNA unwinding element (DUE), permitting loading of DNA polymerase. After initiation quickly degrades to an ADP-DnaA complex that is not apt for DNA replication. Binds acidic phospholipids. In Neisseria gonorrhoeae (strain ATCC 700825 / FA 1090), this protein is Chromosomal replication initiator protein DnaA.